Here is a 378-residue protein sequence, read N- to C-terminus: Glutamate 5-kinase (378 aa).

An ATP-binding site is contributed by Lys-20. Substrate is bound by residues Ser-60, Asp-147, and Asn-159. Residues Thr-179–Asp-180 and Thr-221–Lys-227 contribute to the ATP site. In terms of domain architecture, PUA spans Arg-286–Met-364.

It belongs to the glutamate 5-kinase family.

The protein resides in the cytoplasm. The catalysed reaction is L-glutamate + ATP = L-glutamyl 5-phosphate + ADP. It participates in amino-acid biosynthesis; L-proline biosynthesis; L-glutamate 5-semialdehyde from L-glutamate: step 1/2. Catalyzes the transfer of a phosphate group to glutamate to form L-glutamate 5-phosphate. The sequence is that of Glutamate 5-kinase from Bordetella petrii (strain ATCC BAA-461 / DSM 12804 / CCUG 43448).